The chain runs to 141 residues: Nucleoside diphosphate kinase (141 aa).

Residues Lys-11, Phe-59, Arg-87, Thr-93, Arg-104, and Asn-114 each coordinate ATP. The active-site Pros-phosphohistidine intermediate is the His-117.

It belongs to the NDK family. In terms of assembly, homotetramer. Mg(2+) is required as a cofactor.

It localises to the cytoplasm. It carries out the reaction a 2'-deoxyribonucleoside 5'-diphosphate + ATP = a 2'-deoxyribonucleoside 5'-triphosphate + ADP. The catalysed reaction is a ribonucleoside 5'-diphosphate + ATP = a ribonucleoside 5'-triphosphate + ADP. In terms of biological role, major role in the synthesis of nucleoside triphosphates other than ATP. The ATP gamma phosphate is transferred to the NDP beta phosphate via a ping-pong mechanism, using a phosphorylated active-site intermediate. This is Nucleoside diphosphate kinase from Pseudomonas fluorescens (strain ATCC BAA-477 / NRRL B-23932 / Pf-5).